We begin with the raw amino-acid sequence, 185 residues long: Ribosome-recycling factor (185 aa).

Belongs to the RRF family.

The protein localises to the cytoplasm. Its function is as follows. Responsible for the release of ribosomes from messenger RNA at the termination of protein biosynthesis. May increase the efficiency of translation by recycling ribosomes from one round of translation to another. The chain is Ribosome-recycling factor from Streptococcus pneumoniae serotype 19F (strain G54).